We begin with the raw amino-acid sequence, 97 residues long: Class II hydrophobin A (97 aa).

Positions 1-15 (MKSVVFASLIASALA) are cleaved as a signal peptide. 3 cysteine pairs are disulfide-bonded: Cys-30-Cys-79, Cys-40-Cys-53, and Cys-80-Cys-91.

Belongs to the cerato-ulmin hydrophobin family.

The protein localises to the secreted. Its subcellular location is the cell wall. It is found in the vacuole. It localises to the cytoplasmic vesicle. Its function is as follows. Aerial growth, conidiation, and dispersal of filamentous fungi in the environment rely upon a capability of their secreting small amphipathic proteins called hydrophobins (HPBs) with low sequence identity. Class I can self-assemble into an outermost layer of rodlet bundles on aerial cell surfaces, conferring cellular hydrophobicity that supports fungal growth, development and dispersal; whereas Class II form highly ordered films at water-air interfaces through intermolecular interactions but contribute nothing to the rodlet structure. Hyd2A contributes to certain cell wall-related features, such as hydrophobicity but is not involved in cell wall-related events during fungal proliferation in host hemocoel. Does not contribute to conidial hydrophobicity. Involved in insect hemocoel colonization independent of cell hydrophobicity, as well as in the asexual development. The polypeptide is Class II hydrophobin A (Beauveria bassiana (strain ARSEF 2860) (White muscardine disease fungus)).